Consider the following 441-residue polypeptide: GTPase Der (441 aa).

EngA-type G domains follow at residues 4 to 168 (PVVA…PEDI) and 177 to 352 (IRIA…EQNS). Residues 10–17 (GRPNVGKS), 57–61 (DTGGI), 121–124 (NKVE), 183–190 (GRPNVGKS), 230–234 (DTAGM), and 295–298 (NKWD) contribute to the GTP site. The 85-residue stretch at 353–437 (TRVATATLNT…PIRMIVRQKD (85 aa)) folds into the KH-like domain.

It belongs to the TRAFAC class TrmE-Era-EngA-EngB-Septin-like GTPase superfamily. EngA (Der) GTPase family. In terms of assembly, associates with the 50S ribosomal subunit.

In terms of biological role, GTPase that plays an essential role in the late steps of ribosome biogenesis. This chain is GTPase Der, found in Desulfitobacterium hafniense (strain Y51).